Reading from the N-terminus, the 35-residue chain is Thionin NsW2 (35 aa).

3 disulfide bridges follow: cysteine 4–cysteine 32, cysteine 12–cysteine 30, and cysteine 16–cysteine 26.

Contains 4 disulfide bonds.

The protein localises to the secreted. Functionally, antimicrobial peptide disrupting membranes. Has antibacterial against Gram-positive bacteria S.aureus (MIC=6.5 uM) and B.subtilis (MIC=3.25 uM) but not against Gram-negative bacterium E.coli. Has antifungal activity against C.albicans (MIC=3.25 uM). This is Thionin NsW2 from Nigella sativa (Black cumin).